The primary structure comprises 269 residues: Mitochondrial genome maintenance protein MGM101 (269 aa).

The N-terminal 30 residues, 1 to 30 (MKSIFKVRGCVSHAAQFCQKRTVVSTGTSN), are a transit peptide targeting the mitochondrion.

It belongs to the MGM101 family.

It localises to the mitochondrion matrix. It is found in the mitochondrion nucleoid. Its function is as follows. Performs an essential function in the repair of oxidatively damaged mtDNA that is required for the maintenance of the mitochondrial genome. Binds to DNA. The chain is Mitochondrial genome maintenance protein MGM101 (MGM101) from Saccharomyces cerevisiae (strain ATCC 204508 / S288c) (Baker's yeast).